Consider the following 304-residue polypeptide: Non-specific ribonucleoside hydrolase RihC (304 aa).

His233 is an active-site residue.

It belongs to the IUNH family. RihC subfamily.

Its function is as follows. Hydrolyzes both purine and pyrimidine ribonucleosides with a broad-substrate specificity. The polypeptide is Non-specific ribonucleoside hydrolase RihC (Klebsiella pneumoniae subsp. pneumoniae (strain ATCC 700721 / MGH 78578)).